A 251-amino-acid chain; its full sequence is Ubiquinone/menaquinone biosynthesis C-methyltransferase UbiE (251 aa).

Residues Thr74, Asp95, and 123–124 each bind S-adenosyl-L-methionine; that span reads DA.

This sequence belongs to the class I-like SAM-binding methyltransferase superfamily. MenG/UbiE family.

The catalysed reaction is a 2-demethylmenaquinol + S-adenosyl-L-methionine = a menaquinol + S-adenosyl-L-homocysteine + H(+). It carries out the reaction a 2-methoxy-6-(all-trans-polyprenyl)benzene-1,4-diol + S-adenosyl-L-methionine = a 5-methoxy-2-methyl-3-(all-trans-polyprenyl)benzene-1,4-diol + S-adenosyl-L-homocysteine + H(+). Its pathway is quinol/quinone metabolism; menaquinone biosynthesis; menaquinol from 1,4-dihydroxy-2-naphthoate: step 2/2. It functions in the pathway cofactor biosynthesis; ubiquinone biosynthesis. Functionally, methyltransferase required for the conversion of demethylmenaquinol (DMKH2) to menaquinol (MKH2) and the conversion of 2-polyprenyl-6-methoxy-1,4-benzoquinol (DDMQH2) to 2-polyprenyl-3-methyl-6-methoxy-1,4-benzoquinol (DMQH2). The chain is Ubiquinone/menaquinone biosynthesis C-methyltransferase UbiE from Idiomarina loihiensis (strain ATCC BAA-735 / DSM 15497 / L2-TR).